Here is a 470-residue protein sequence, read N- to C-terminus: Argininosuccinate lyase (470 aa).

The protein belongs to the lyase 1 family. Argininosuccinate lyase subfamily.

Its subcellular location is the cytoplasm. The catalysed reaction is 2-(N(omega)-L-arginino)succinate = fumarate + L-arginine. The protein operates within amino-acid biosynthesis; L-arginine biosynthesis; L-arginine from L-ornithine and carbamoyl phosphate: step 3/3. This is Argininosuccinate lyase from Mycobacterium leprae (strain Br4923).